The following is a 138-amino-acid chain: ATP synthase epsilon chain (138 aa).

The protein belongs to the ATPase epsilon chain family. F-type ATPases have 2 components, CF(1) - the catalytic core - and CF(0) - the membrane proton channel. CF(1) has five subunits: alpha(3), beta(3), gamma(1), delta(1), epsilon(1). CF(0) has three main subunits: a, b and c.

It is found in the cell inner membrane. In terms of biological role, produces ATP from ADP in the presence of a proton gradient across the membrane. In Geobacter metallireducens (strain ATCC 53774 / DSM 7210 / GS-15), this protein is ATP synthase epsilon chain.